The chain runs to 292 residues: Ribosomal protein L11 methyltransferase (292 aa).

4 residues coordinate S-adenosyl-L-methionine: Thr-136, Gly-159, Asp-181, and Asn-228.

It belongs to the methyltransferase superfamily. PrmA family.

Its subcellular location is the cytoplasm. It catalyses the reaction L-lysyl-[protein] + 3 S-adenosyl-L-methionine = N(6),N(6),N(6)-trimethyl-L-lysyl-[protein] + 3 S-adenosyl-L-homocysteine + 3 H(+). Its function is as follows. Methylates ribosomal protein L11. The protein is Ribosomal protein L11 methyltransferase of Rhizobium etli (strain ATCC 51251 / DSM 11541 / JCM 21823 / NBRC 15573 / CFN 42).